Here is an 88-residue protein sequence, read N- to C-terminus: Sec-independent protein translocase protein TatA (88 aa).

A helical transmembrane segment spans residues methionine 1–glycine 21. The tract at residues threonine 62–valine 88 is disordered.

This sequence belongs to the TatA/E family. In terms of assembly, the Tat system comprises two distinct complexes: a TatABC complex, containing multiple copies of TatA, TatB and TatC subunits, and a separate TatA complex, containing only TatA subunits. Substrates initially bind to the TatABC complex, which probably triggers association of the separate TatA complex to form the active translocon.

The protein resides in the cell inner membrane. Part of the twin-arginine translocation (Tat) system that transports large folded proteins containing a characteristic twin-arginine motif in their signal peptide across membranes. TatA could form the protein-conducting channel of the Tat system. The polypeptide is Sec-independent protein translocase protein TatA (Methylobacterium sp. (strain 4-46)).